Consider the following 189-residue polypeptide: Small ribosomal subunit protein uS5 (189 aa).

The S5 DRBM domain occupies 22 to 85 (FVDKLVAINR…EAAKRELIFV (64 aa)).

It belongs to the universal ribosomal protein uS5 family. In terms of assembly, part of the 30S ribosomal subunit. Contacts proteins S4 and S8.

In terms of biological role, with S4 and S12 plays an important role in translational accuracy. Located at the back of the 30S subunit body where it stabilizes the conformation of the head with respect to the body. The protein is Small ribosomal subunit protein uS5 of Rhizobium etli (strain CIAT 652).